The sequence spans 198 residues: Peptide deformylase (198 aa).

Fe cation is bound by residues cysteine 123 and histidine 167. Glutamate 168 is an active-site residue. Histidine 171 lines the Fe cation pocket.

It belongs to the polypeptide deformylase family. Fe(2+) serves as cofactor.

It catalyses the reaction N-terminal N-formyl-L-methionyl-[peptide] + H2O = N-terminal L-methionyl-[peptide] + formate. Its function is as follows. Removes the formyl group from the N-terminal Met of newly synthesized proteins. Requires at least a dipeptide for an efficient rate of reaction. N-terminal L-methionine is a prerequisite for activity but the enzyme has broad specificity at other positions. The sequence is that of Peptide deformylase from Ureaplasma parvum serovar 3 (strain ATCC 27815 / 27 / NCTC 11736).